The chain runs to 699 residues: Elongation factor G (699 aa).

Residues 8–288 (EDYRNFGIMA…AVCEYLPSPL (281 aa)) enclose the tr-type G domain. GTP contacts are provided by residues 17 to 24 (AHIDAGKT), 86 to 90 (DTPGH), and 140 to 143 (NKMD).

The protein belongs to the TRAFAC class translation factor GTPase superfamily. Classic translation factor GTPase family. EF-G/EF-2 subfamily.

The protein resides in the cytoplasm. Catalyzes the GTP-dependent ribosomal translocation step during translation elongation. During this step, the ribosome changes from the pre-translocational (PRE) to the post-translocational (POST) state as the newly formed A-site-bound peptidyl-tRNA and P-site-bound deacylated tRNA move to the P and E sites, respectively. Catalyzes the coordinated movement of the two tRNA molecules, the mRNA and conformational changes in the ribosome. This is Elongation factor G from Allorhizobium ampelinum (strain ATCC BAA-846 / DSM 112012 / S4) (Agrobacterium vitis (strain S4)).